Consider the following 124-residue polypeptide: Ubiquitin-related modifier 1 (124 aa).

The tract at residues 34–53 is disordered; the sequence is IPSLVPKDNTTSAKNPPPKD. The residue at position 124 (glycine 124) is a 1-thioglycine. Residue glycine 124 forms a Glycyl lysine isopeptide (Gly-Lys) (interchain with K-? in acceptor proteins) linkage.

It belongs to the URM1 family. C-terminal thiocarboxylation occurs in 2 steps, it is first acyl-adenylated (-COAMP) via the hesA/moeB/thiF part of UBA4, then thiocarboxylated (-COSH) via the rhodanese domain of UBA4.

The protein localises to the cytoplasm. It functions in the pathway tRNA modification; 5-methoxycarbonylmethyl-2-thiouridine-tRNA biosynthesis. Its function is as follows. Acts as a sulfur carrier required for 2-thiolation of mcm(5)S(2)U at tRNA wobble positions of cytosolic tRNA(Lys), tRNA(Glu) and tRNA(Gln). Serves as sulfur donor in tRNA 2-thiolation reaction by being thiocarboxylated (-COSH) at its C-terminus by the MOCS3 homolog UBA4. The sulfur is then transferred to tRNA to form 2-thiolation of mcm(5)S(2)U. Prior mcm(5) tRNA modification by the elongator complex is required for 2-thiolation. Also acts as a ubiquitin-like protein (UBL) that is covalently conjugated via an isopeptide bond to lysine residues of target proteins such as AHP1. The thiocarboxylated form serves as substrate for conjugation and oxidative stress specifically induces the formation of UBL-protein conjugates. This chain is Ubiquitin-related modifier 1, found in Coprinopsis cinerea (strain Okayama-7 / 130 / ATCC MYA-4618 / FGSC 9003) (Inky cap fungus).